Consider the following 283-residue polypeptide: Acetylglutamate kinase (283 aa).

Substrate contacts are provided by residues 64–65 (GG), Arg-86, and Asn-181.

The protein belongs to the acetylglutamate kinase family. ArgB subfamily.

It localises to the cytoplasm. The catalysed reaction is N-acetyl-L-glutamate + ATP = N-acetyl-L-glutamyl 5-phosphate + ADP. It functions in the pathway amino-acid biosynthesis; L-arginine biosynthesis; N(2)-acetyl-L-ornithine from L-glutamate: step 2/4. Catalyzes the ATP-dependent phosphorylation of N-acetyl-L-glutamate. This is Acetylglutamate kinase from Sulfurimonas denitrificans (strain ATCC 33889 / DSM 1251) (Thiomicrospira denitrificans (strain ATCC 33889 / DSM 1251)).